The primary structure comprises 115 residues: Large ribosomal subunit protein bL20 (115 aa).

Belongs to the bacterial ribosomal protein bL20 family.

Binds directly to 23S ribosomal RNA and is necessary for the in vitro assembly process of the 50S ribosomal subunit. It is not involved in the protein synthesizing functions of that subunit. The protein is Large ribosomal subunit protein bL20 of Prochlorococcus marinus (strain MIT 9303).